The following is a 297-amino-acid chain: Pyridoxal 5'-phosphate synthase subunit PdxS (297 aa).

Asp-27 contacts D-ribose 5-phosphate. Lys-84 acts as the Schiff-base intermediate with D-ribose 5-phosphate in catalysis. Gly-156 contributes to the D-ribose 5-phosphate binding site. A D-glyceraldehyde 3-phosphate-binding site is contributed by Arg-168. Residues Gly-217 and 238–239 (GS) each bind D-ribose 5-phosphate.

Belongs to the PdxS/SNZ family. In the presence of PdxT, forms a dodecamer of heterodimers.

The catalysed reaction is aldehydo-D-ribose 5-phosphate + D-glyceraldehyde 3-phosphate + L-glutamine = pyridoxal 5'-phosphate + L-glutamate + phosphate + 3 H2O + H(+). It participates in cofactor biosynthesis; pyridoxal 5'-phosphate biosynthesis. Functionally, catalyzes the formation of pyridoxal 5'-phosphate from ribose 5-phosphate (RBP), glyceraldehyde 3-phosphate (G3P) and ammonia. The ammonia is provided by the PdxT subunit. Can also use ribulose 5-phosphate and dihydroxyacetone phosphate as substrates, resulting from enzyme-catalyzed isomerization of RBP and G3P, respectively. In Corynebacterium diphtheriae (strain ATCC 700971 / NCTC 13129 / Biotype gravis), this protein is Pyridoxal 5'-phosphate synthase subunit PdxS.